We begin with the raw amino-acid sequence, 817 residues long: E3 ubiquitin-protein ligase TRIM9 (817 aa).

The RING-type zinc-finger motif lies at C10–R50. T41 bears the Phosphothreonine mark. Phosphoserine occurs at positions 44, 46, 49, and 53. 2 B box-type zinc fingers span residues A163 to P212 and R224 to L266. Positions 168, 171, 193, 198, 229, 232, 252, and 258 each coordinate Zn(2+). A coiled-coil region spans residues H273 to K340. Residues I374 to V432 enclose the COS domain. Positions V440–A535 constitute a Fibronectin type-III domain. Positions A535 to P557 are disordered. Residues G537–T547 show a composition bias toward basic and acidic residues. The B30.2/SPRY domain occupies E613 to L794.

Belongs to the TRIM/RBCC family. Interacts with SNAP25. Post-translationally, auto-ubiquitinated. In terms of tissue distribution, brain. Expression is higher in the cerebral cortex and hippocampus (at protein level). Its expression is mainly confined to the central nervous system. The developing neocortex, the dorsal thalamus, the midbrain, the basal area of the hindbrain and spinal cord show high level of expression during embryogenesis. In adult brain, it is detected in the Purkinje cells of the cerebellum, in the hippocampus, and in the cortex.

It localises to the cytoplasm. Its subcellular location is the cell projection. The protein resides in the dendrite. The protein localises to the cytoplasmic vesicle. It is found in the secretory vesicle. It localises to the synaptic vesicle. Its subcellular location is the synapse. The protein resides in the cytoskeleton. It catalyses the reaction S-ubiquitinyl-[E2 ubiquitin-conjugating enzyme]-L-cysteine + [acceptor protein]-L-lysine = [E2 ubiquitin-conjugating enzyme]-L-cysteine + N(6)-ubiquitinyl-[acceptor protein]-L-lysine.. It participates in protein modification; protein ubiquitination. Its function is as follows. E3 ubiquitin-protein ligase which ubiquitinates itself in cooperation with an E2 enzyme UBE2D2/UBC4 and serves as a targeting signal for proteasomal degradation. May play a role in regulation of neuronal functions. May act as a regulator of synaptic vesicle exocytosis by controlling the availability of SNAP25 for the SNARE complex formation. This is E3 ubiquitin-protein ligase TRIM9 (Trim9) from Mus musculus (Mouse).